The sequence spans 450 residues: Enolase (450 aa).

Glutamine 173 contributes to the (2R)-2-phosphoglycerate binding site. The active-site Proton donor is glutamate 215. 3 residues coordinate Mg(2+): aspartate 254, glutamate 308, and aspartate 335. Positions 360, 389, 390, and 411 each coordinate (2R)-2-phosphoglycerate. Lysine 360 acts as the Proton acceptor in catalysis.

It belongs to the enolase family. Mg(2+) serves as cofactor.

The protein localises to the cytoplasm. Its subcellular location is the secreted. It localises to the cell surface. The catalysed reaction is (2R)-2-phosphoglycerate = phosphoenolpyruvate + H2O. It participates in carbohydrate degradation; glycolysis; pyruvate from D-glyceraldehyde 3-phosphate: step 4/5. Its function is as follows. Catalyzes the reversible conversion of 2-phosphoglycerate (2-PG) into phosphoenolpyruvate (PEP). It is essential for the degradation of carbohydrates via glycolysis. This is Enolase from Malacoplasma penetrans (strain HF-2) (Mycoplasma penetrans).